A 244-amino-acid chain; its full sequence is Ferric aerobactin reductase IutB (244 aa).

Residues Cys220, Cys221, Cys232, and Cys235 each coordinate [2Fe-2S] cluster.

As to quaternary structure, monomer. [2Fe-2S] cluster serves as cofactor.

It is found in the cytoplasm. It carries out the reaction 2 a Fe(II)-siderophore + NAD(+) + H(+) = 2 a Fe(III)-siderophore + NADH. It catalyses the reaction 2 a Fe(II)-siderophore + NADP(+) + H(+) = 2 a Fe(III)-siderophore + NADPH. Its function is as follows. Ferric-siderophore reductase involved in iron removal from the siderophores after their transport into the cell. Acts as a major ferric-aerobactin reductase catalyzing the reduction of Fe(3+)-aerobactin, a citrate-hydroxamate siderophore produced by other bacteria. Catalyzes reduction of Fe(3+)-vulnibactin, a catecholate siderophore synthesized by V.vulnificus, in the absence of VuuB. Catalyzes reduction of ferrioxamine B and Fe(3+)-vibriobactin in vitro. No activity with Fe(3+)-enterobactin. Catalyzes reduction of ferric chelating compound Fe(3+)-nitrilotriacetic acid (NTA) in the presence of NADH, NADPH or reduced glutathione (GSH) as its electron donor in vitro. Also catalyzes reduction of ferric chelating compounds Fe(3+)-citrate and Fe(3+)-EDTA as well as non-complexed FeCl3 in the presence of GSH as its electron donor in vitro. Highest activity with Fe(3+)-NTA as electron acceptor and GSH as donor. This chain is Ferric aerobactin reductase IutB, found in Vibrio vulnificus.